A 136-amino-acid chain; its full sequence is Glutamyl-tRNA(Gln) amidotransferase subunit C, mitochondrial (136 aa).

The transit peptide at 1–27 directs the protein to the mitochondrion; that stretch reads MWARAVHLGLRAAARGRRGFTSKADPQ.

The protein belongs to the GatC family. As to quaternary structure, subunit of the heterotrimeric GatCAB amidotransferase (AdT) complex, composed of A (QRSL1), B (GATB) and C (GATC) subunits.

The protein localises to the mitochondrion. It carries out the reaction L-glutamyl-tRNA(Gln) + L-glutamine + ATP + H2O = L-glutaminyl-tRNA(Gln) + L-glutamate + ADP + phosphate + H(+). Allows the formation of correctly charged Gln-tRNA(Gln) through the transamidation of misacylated Glu-tRNA(Gln) in the mitochondria. The reaction takes place in the presence of glutamine and ATP through an activated gamma-phospho-Glu-tRNA(Gln). The protein is Glutamyl-tRNA(Gln) amidotransferase subunit C, mitochondrial of Bos taurus (Bovine).